The chain runs to 103 residues: UPF0145 protein Amet_0532 (103 aa).

The protein belongs to the UPF0145 family.

This chain is UPF0145 protein Amet_0532, found in Alkaliphilus metalliredigens (strain QYMF).